The primary structure comprises 279 residues: Large ribosomal subunit protein uL2 (279 aa).

Disordered stretches follow at residues 30-59 and 225-279; these read EKSL…GGHK and VMNP…KNKR. The segment covering 50 to 59 has biased composition (basic residues); sequence TTRHKGGGHK. Over residues 253 to 268 the composition is skewed to basic and acidic residues; it reads PEGRTRRPNKESDKLI. The segment covering 269–279 has biased composition (basic residues); sequence VRRRRTGKNKR.

It belongs to the universal ribosomal protein uL2 family. Part of the 50S ribosomal subunit. Forms a bridge to the 30S subunit in the 70S ribosome.

In terms of biological role, one of the primary rRNA binding proteins. Required for association of the 30S and 50S subunits to form the 70S ribosome, for tRNA binding and peptide bond formation. It has been suggested to have peptidyltransferase activity; this is somewhat controversial. Makes several contacts with the 16S rRNA in the 70S ribosome. The sequence is that of Large ribosomal subunit protein uL2 from Kocuria rhizophila (strain ATCC 9341 / DSM 348 / NBRC 103217 / DC2201).